The chain runs to 612 residues: Bifunctional 6(G)-fructosyltransferase/2,1-fructan:2,1-fructan 1-fructosyltransferase (612 aa).

The Cytoplasmic portion of the chain corresponds to 1–24 (MDAQDIESRHPLIGARPRRRALRS). A helical; Signal-anchor for type II membrane protein membrane pass occupies residues 25–45 (LSILLAAALLLGLVLFYANGT). Topologically, residues 46-612 (GSGTAVDPVR…NSTYNDFYHF (567 aa)) are vacuolar. Substrate-binding positions include 82-85 (YMND), Gln-101, and Trp-109. Residue Asp-85 is part of the active site. Asn-111 is a glycosylation site (N-linked (GlcNAc...) asparagine). Residues 144–145 (WT) and 208–209 (RD) each bind substrate. Asn-216 and Asn-230 each carry an N-linked (GlcNAc...) asparagine glycan. Glu-267 is a binding site for substrate. Asn-465 is a glycosylation site (N-linked (GlcNAc...) asparagine). Cysteines 466 and 514 form a disulfide. N-linked (GlcNAc...) asparagine glycosylation is found at Asn-586 and Asn-603.

It belongs to the glycosyl hydrolase 32 family. Might be processed in two N-terminal and C-terminal proteolytic fragments.

It localises to the vacuole membrane. The catalysed reaction is [1-beta-D-fructofuranosyl-(2-&gt;1)-]m+1 alpha-D-glucopyranoside + [1-beta-D-fructofuranosyl-(2-&gt;1)-]n+1 alpha-D-glucopyranoside = [1-beta-D-fructofuranosyl-(2-&gt;1)-]m alpha-D-glucopyranoside + [1-beta-D-fructofuranosyl-(2-&gt;1)-]n+1 beta-D-fructofuranosyl-(2-&gt;6)-alpha-D-glucopyranoside (m &gt; 0, n &gt;= 0).. It catalyses the reaction [beta-D-fructosyl-(2-&gt;1)-]m + [beta-D-fructosyl-(2-&gt;1)-]n = [beta-D-fructosyl-(2-&gt;1)-]m-1 + [beta-D-fructosyl-(2-&gt;1)-]n+1.. Functionally, involved in the synthesis of fructan of the inulin neoseries. Catalyzes a self-transfer between identical oligosaccharides of the 1-kestose series. This is Bifunctional 6(G)-fructosyltransferase/2,1-fructan:2,1-fructan 1-fructosyltransferase from Allium cepa (Onion).